Here is a 305-residue protein sequence, read N- to C-terminus: MRTRTEIVSTTQTSATWRDYFQLCKPRVVLLMLLTAIVGMCLASPGIVSWRVFLFGNLGIALAASSAAAINHLLEHHLDKLMRRTYRRPIVQGKINRKNAAIFAAILCILSMIILIAFVNLLTALLTFITLIGYAGFYTLYLKHATPQNIVIGGLAGAAPPLLGWVAVTGHIDPPALILLLIIFLWTPPHFWALAIHRIDDYAKANIPMLPNTHGIIYTKINILLYTLLLTAISFLPFVIMTSGWIYFSSVCLLNLGFLYWAIRLLTSQRKEIPMRTFQYSIWYLMLLFTALLVDHYVYLALKLY.

Helical transmembrane passes span 28–48, 52–72, 102–122, 123–143, 150–170, 176–196, 221–241, 243–263, and 282–302; these read VVLLMLLTAIVGMCLASPGIV, VFLFGNLGIALAASSAAAINH, IFAAILCILSMIILIAFVNLL, TALLTFITLIGYAGFYTLYLK, IVIGGLAGAAPPLLGWVAVTG, ALILLLIIFLWTPPHFWALAI, INILLYTLLLTAISFLPFVIM, SGWIYFSSVCLLNLGFLYWAI, and IWYLMLLFTALLVDHYVYLAL.

It belongs to the UbiA prenyltransferase family. Protoheme IX farnesyltransferase subfamily.

The protein resides in the cell inner membrane. It catalyses the reaction heme b + (2E,6E)-farnesyl diphosphate + H2O = Fe(II)-heme o + diphosphate. The protein operates within porphyrin-containing compound metabolism; heme O biosynthesis; heme O from protoheme: step 1/1. Converts heme B (protoheme IX) to heme O by substitution of the vinyl group on carbon 2 of heme B porphyrin ring with a hydroxyethyl farnesyl side group. This chain is Protoheme IX farnesyltransferase, found in Coxiella burnetii (strain CbuK_Q154) (Coxiella burnetii (strain Q154)).